The chain runs to 239 residues: Tumor protein p53-inducible nuclear protein 1 (239 aa).

The short motif at 25–37 (EKEDDEWILVDFI) is the LIR element.

As to quaternary structure, interacts with p53/TP53 and HIPK2. Interacts with PRKCG, GABARAP, GABARAPL1, GABARAPL2, MAP1LC3A, MAP1LC3B and MAP1LC3C. Specifically expressed by acinar cells of chronic pancreatitis tissue.

The protein localises to the cytoplasm. It is found in the cytosol. The protein resides in the nucleus. Its subcellular location is the PML body. It localises to the cytoplasmic vesicle. The protein localises to the autophagosome. In terms of biological role, antiproliferative and proapoptotic protein involved in cell stress response which acts as a dual regulator of transcription and autophagy. Acts as a positive regulator of autophagy. In response to cellular stress or activation of autophagy, relocates to autophagosomes where it interacts with autophagosome-associated proteins GABARAP, GABARAPL1/L2, MAP1LC3A/B/C and regulates autophagy. Acts as an antioxidant and plays a major role in p53/TP53-driven oxidative stress response. Possesses both a p53/TP53-independent intracellular reactive oxygen species (ROS) regulatory function and a p53/TP53-dependent transcription regulatory function. Positively regulates p53/TP53 and p73/TP73 and stimulates their capacity to induce apoptosis and regulate cell cycle. In response to double-strand DNA breaks, promotes p53/TP53 phosphorylation on 'Ser-46' and subsequent apoptosis. Acts as a tumor suppressor by inducing cell death by an autophagy and caspase-dependent mechanism. Can reduce cell migration by regulating the expression of SPARC. The protein is Tumor protein p53-inducible nuclear protein 1 (Trp53inp1) of Rattus norvegicus (Rat).